The sequence spans 382 residues: UDP-4-amino-4-deoxy-L-arabinose--oxoglutarate aminotransferase (382 aa).

Residue lysine 183 is modified to N6-(pyridoxal phosphate)lysine.

Belongs to the DegT/DnrJ/EryC1 family. ArnB subfamily. As to quaternary structure, homodimer. Requires pyridoxal 5'-phosphate as cofactor.

It catalyses the reaction UDP-4-amino-4-deoxy-beta-L-arabinose + 2-oxoglutarate = UDP-beta-L-threo-pentopyranos-4-ulose + L-glutamate. Its pathway is nucleotide-sugar biosynthesis; UDP-4-deoxy-4-formamido-beta-L-arabinose biosynthesis; UDP-4-deoxy-4-formamido-beta-L-arabinose from UDP-alpha-D-glucuronate: step 2/3. It participates in bacterial outer membrane biogenesis; lipopolysaccharide biosynthesis. Functionally, catalyzes the conversion of UDP-4-keto-arabinose (UDP-Ara4O) to UDP-4-amino-4-deoxy-L-arabinose (UDP-L-Ara4N). The modified arabinose is attached to lipid A and is required for resistance to polymyxin and cationic antimicrobial peptides. The polypeptide is UDP-4-amino-4-deoxy-L-arabinose--oxoglutarate aminotransferase (Pseudomonas aeruginosa (strain UCBPP-PA14)).